The chain runs to 442 residues: Transposase InsG for insertion sequence element IS4 (442 aa).

The protein belongs to the transposase 11 family.

In terms of biological role, involved in the transposition of the insertion sequence IS4. The polypeptide is Transposase InsG for insertion sequence element IS4 (insG) (Escherichia coli (strain K12)).